Reading from the N-terminus, the 375-residue chain is Lipid-A-disaccharide synthase (375 aa).

Belongs to the LpxB family.

It carries out the reaction a lipid X + a UDP-2-N,3-O-bis[(3R)-3-hydroxyacyl]-alpha-D-glucosamine = a lipid A disaccharide + UDP + H(+). It functions in the pathway bacterial outer membrane biogenesis; LPS lipid A biosynthesis. Functionally, condensation of UDP-2,3-diacylglucosamine and 2,3-diacylglucosamine-1-phosphate to form lipid A disaccharide, a precursor of lipid A, a phosphorylated glycolipid that anchors the lipopolysaccharide to the outer membrane of the cell. The chain is Lipid-A-disaccharide synthase from Pseudomonas putida (strain ATCC 47054 / DSM 6125 / CFBP 8728 / NCIMB 11950 / KT2440).